A 660-amino-acid polypeptide reads, in one-letter code: GRIP and coiled-coil domain-containing protein 2 (660 aa).

The tract at residues 1–28 is disordered; that stretch reads MSAPESSISPVPPPGSSSGGGKKLDSLP. Coiled-coil stretches lie at residues 30 to 92, 115 to 464, and 517 to 596; these read EDLV…VENN, EWKE…KAIA, and DEYR…EYLK. Residues 585 to 636 enclose the GRIP domain; sequence ELSNEKNMEYLKNVFVQFLKPESVPAERDQLVIVLQRVLHLSPKEVEILKAA.

The sequence is that of GRIP and coiled-coil domain-containing protein 2 from Caenorhabditis elegans.